Reading from the N-terminus, the 289-residue chain is 4-hydroxybenzoate octaprenyltransferase (289 aa).

7 helical membrane passes run 33–53 (LWALWVAAPGLPPLWILAVFV), 99–119 (LFVVLVVLAFLLVLTLNTMTI), 141–161 (LPQVVLGAAFGWSIPMAFAAV), 163–183 (ESVPLSCWLMFLANILWAVAY), 213–233 (LIIGILQVAVLALMVVIGRLN), 238–258 (EFYWSVLVAGLLFAYQQKLIV), and 268–288 (AFLNNNYVGLVLFLGLAMSYW).

Belongs to the UbiA prenyltransferase family. Mg(2+) is required as a cofactor.

It is found in the cell inner membrane. It carries out the reaction all-trans-octaprenyl diphosphate + 4-hydroxybenzoate = 4-hydroxy-3-(all-trans-octaprenyl)benzoate + diphosphate. It functions in the pathway cofactor biosynthesis; ubiquinone biosynthesis. Functionally, catalyzes the prenylation of para-hydroxybenzoate (PHB) with an all-trans polyprenyl group. Mediates the second step in the final reaction sequence of ubiquinone-8 (UQ-8) biosynthesis, which is the condensation of the polyisoprenoid side chain with PHB, generating the first membrane-bound Q intermediate 3-octaprenyl-4-hydroxybenzoate. This chain is 4-hydroxybenzoate octaprenyltransferase, found in Enterobacter sp. (strain 638).